A 341-amino-acid chain; its full sequence is Glycerol-3-phosphate dehydrogenase [NAD(P)+] (341 aa).

4 residues coordinate NADPH: S15, W16, R36, and K110. 3 residues coordinate sn-glycerol 3-phosphate: K110, G139, and S141. An NADPH-binding site is contributed by A143. Residues K194, D247, S257, R258, and N259 each contribute to the sn-glycerol 3-phosphate site. The Proton acceptor role is filled by K194. R258 is a binding site for NADPH. 2 residues coordinate NADPH: V282 and E284.

The protein belongs to the NAD-dependent glycerol-3-phosphate dehydrogenase family.

It is found in the cytoplasm. The catalysed reaction is sn-glycerol 3-phosphate + NAD(+) = dihydroxyacetone phosphate + NADH + H(+). It catalyses the reaction sn-glycerol 3-phosphate + NADP(+) = dihydroxyacetone phosphate + NADPH + H(+). Its pathway is membrane lipid metabolism; glycerophospholipid metabolism. In terms of biological role, catalyzes the reduction of the glycolytic intermediate dihydroxyacetone phosphate (DHAP) to sn-glycerol 3-phosphate (G3P), the key precursor for phospholipid synthesis. In Xanthomonas euvesicatoria pv. vesicatoria (strain 85-10) (Xanthomonas campestris pv. vesicatoria), this protein is Glycerol-3-phosphate dehydrogenase [NAD(P)+].